Consider the following 496-residue polypeptide: Anaerobic nitric oxide reductase flavorubredoxin (496 aa).

Residues 30–210 (TKGTSYNSYL…PFSALVTAKI (181 aa)) are zinc metallo-hydrolase. Residues His-79, Glu-81, Asp-83, His-147, Asp-166, and His-227 each contribute to the Fe cation site. The region spanning 254–393 (ITIFYDSMSN…LCREHGQFIA (140 aa)) is the Flavodoxin-like domain. Residues 260–264 (SMSNN) and 342–369 (AFGSYGWNGGAVDRIHSRLTDAGFETAV) contribute to the FMN site. The region spanning 444–495 (KQCMLCSVCNWVYDPEIGEPNQGVEPNTPWSSVPNDFLCPECHLGKDVFVEI) is the Rubredoxin-like domain. Fe cation is bound by residues Cys-449, Cys-452, Cys-482, and Cys-485.

It in the N-terminal section; belongs to the zinc metallo-hydrolase group 3 family. Homotetramer. It depends on Fe cation as a cofactor. FMN serves as cofactor.

It is found in the cytoplasm. The protein operates within nitrogen metabolism; nitric oxide reduction. In terms of biological role, anaerobic nitric oxide reductase; uses NADH to detoxify nitric oxide (NO), protecting several 4Fe-4S NO-sensitive enzymes. Has at least 2 reductase partners, only one of which (NorW, flavorubredoxin reductase) has been identified. NO probably binds to the di-iron center; electrons enter from the NorW at rubredoxin and are transferred sequentially to the FMN center and the di-iron center. Also able to function as an aerobic oxygen reductase. The chain is Anaerobic nitric oxide reductase flavorubredoxin from Aliivibrio fischeri (strain ATCC 700601 / ES114) (Vibrio fischeri).